A 568-amino-acid polypeptide reads, in one-letter code: Probable asparagine--tRNA ligase, cytoplasmic (568 aa).

This sequence belongs to the class-II aminoacyl-tRNA synthetase family.

The protein resides in the cytoplasm. It carries out the reaction tRNA(Asn) + L-asparagine + ATP = L-asparaginyl-tRNA(Asn) + AMP + diphosphate + H(+). Its function is as follows. Cytosolic asparaginyl-tRNA synthetase which catalyzes the specific attachment of asparagine to its cognate tRNA. This chain is Probable asparagine--tRNA ligase, cytoplasmic (nrs1), found in Schizosaccharomyces pombe (strain 972 / ATCC 24843) (Fission yeast).